Here is a 210-residue protein sequence, read N- to C-terminus: Na(+)-translocating NADH-quinone reductase subunit D (210 aa).

Transmembrane regions (helical) follow at residues 10-30 (VLFGPILDNNPIALQILGVCS), 42-62 (LVMSLALTAVTAFSNLFISMI), 72-92 (IIVQMTIIASLVIVVDQILKA), 103-123 (VFVGLIITNCIVMGRAEAFAM), 143-163 (FVLIVIGTIKELFGFGTILGF), and 178-198 (NGLLILPFSSFFLIGGLIWFI).

Belongs to the NqrDE/RnfAE family. As to quaternary structure, composed of six subunits; NqrA, NqrB, NqrC, NqrD, NqrE and NqrF.

The protein localises to the cell inner membrane. The enzyme catalyses a ubiquinone + n Na(+)(in) + NADH + H(+) = a ubiquinol + n Na(+)(out) + NAD(+). NQR complex catalyzes the reduction of ubiquinone-1 to ubiquinol by two successive reactions, coupled with the transport of Na(+) ions from the cytoplasm to the periplasm. NqrA to NqrE are probably involved in the second step, the conversion of ubisemiquinone to ubiquinol. This is Na(+)-translocating NADH-quinone reductase subunit D from Pseudoalteromonas atlantica (strain T6c / ATCC BAA-1087).